We begin with the raw amino-acid sequence, 302 residues long: N-acetyl-D-glucosamine kinase (302 aa).

Residues Gly-4–Lys-11 and Gly-133–Tyr-140 each bind ATP. Positions 157, 177, 179, and 184 each coordinate Zn(2+).

This sequence belongs to the ROK (NagC/XylR) family. NagK subfamily.

It catalyses the reaction N-acetyl-D-glucosamine + ATP = N-acetyl-D-glucosamine 6-phosphate + ADP + H(+). It functions in the pathway cell wall biogenesis; peptidoglycan recycling. Functionally, catalyzes the phosphorylation of N-acetyl-D-glucosamine (GlcNAc) derived from cell-wall degradation, yielding GlcNAc-6-P. This chain is N-acetyl-D-glucosamine kinase, found in Vibrio atlanticus (strain LGP32) (Vibrio splendidus (strain Mel32)).